Here is a 444-residue protein sequence, read N- to C-terminus: ATP-dependent protease ATPase subunit HslU (444 aa).

Residues I18 and 60 to 65 contribute to the ATP site; that span reads GVGKTE. Residues 141–161 form a disordered region; sequence DAWGNNEEGDNDSGTRQSFRK. Positions 257, 322, and 394 each coordinate ATP.

It belongs to the ClpX chaperone family. HslU subfamily. In terms of assembly, a double ring-shaped homohexamer of HslV is capped on each side by a ring-shaped HslU homohexamer. The assembly of the HslU/HslV complex is dependent on binding of ATP.

It is found in the cytoplasm. ATPase subunit of a proteasome-like degradation complex; this subunit has chaperone activity. The binding of ATP and its subsequent hydrolysis by HslU are essential for unfolding of protein substrates subsequently hydrolyzed by HslV. HslU recognizes the N-terminal part of its protein substrates and unfolds these before they are guided to HslV for hydrolysis. In Aliivibrio fischeri (strain MJ11) (Vibrio fischeri), this protein is ATP-dependent protease ATPase subunit HslU.